Here is a 122-residue protein sequence, read N- to C-terminus: uncharacterized protein (122 aa).

This is an uncharacterized protein from Methanothermobacter thermautotrophicus (Methanobacterium thermoformicicum).